The following is a 418-amino-acid chain: Gamma-glutamyl phosphate reductase (418 aa).

The protein belongs to the gamma-glutamyl phosphate reductase family.

The protein localises to the cytoplasm. The catalysed reaction is L-glutamate 5-semialdehyde + phosphate + NADP(+) = L-glutamyl 5-phosphate + NADPH + H(+). It functions in the pathway amino-acid biosynthesis; L-proline biosynthesis; L-glutamate 5-semialdehyde from L-glutamate: step 2/2. Functionally, catalyzes the NADPH-dependent reduction of L-glutamate 5-phosphate into L-glutamate 5-semialdehyde and phosphate. The product spontaneously undergoes cyclization to form 1-pyrroline-5-carboxylate. The chain is Gamma-glutamyl phosphate reductase from Agathobacter rectalis (strain ATCC 33656 / DSM 3377 / JCM 17463 / KCTC 5835 / VPI 0990) (Eubacterium rectale).